The following is a 656-amino-acid chain: Protein terminal ear1 (656 aa).

In terms of domain architecture, RRM spans 211-283; it reads SLVVLSPLPG…RRLVVEFTRP (73 aa). Disordered stretches follow at residues 280-408 and 576-656; these read FTRP…WKGR and LTDP…GYDD. Residues 288–299 are compositionally biased toward basic residues; that stretch reads PRRRGYAPHQHR. The span at 314–331 shows a compositional bias: low complexity; that stretch reads PSQPTSSQPPASSSSSGS. Positions 346–358 are enriched in polar residues; it reads CKSSAGSDQSSKG. 3 stretches are compositionally biased toward low complexity: residues 377–397, 585–601, and 612–630; these read AAAA…QKGV, RSPA…SRAA, and PAPS…STHA. The span at 642 to 656 shows a compositional bias: basic and acidic residues; that stretch reads DIRLAGELRRLGYDD.

In terms of tissue distribution, expressed below the shoot tip down the flanks of shoot apex in an alternating pattern. Not expressed in root tips, leaves or immature ears (female inflorescences).

In terms of biological role, probable RNA-binding protein. Involved in the regulation of leaf initiation rate and shoot development. Seems to act more predominantly in the early stages of the leaf development, rather than in the later phase. The chain is Protein terminal ear1 (TE1) from Zea mays (Maize).